A 120-amino-acid polypeptide reads, in one-letter code: NAD(P)H-quinone oxidoreductase subunit 3, chloroplastic (120 aa).

The next 3 membrane-spanning stretches (helical) occupy residues 14 to 34 (LIIS…LAPI), 64 to 84 (MFAL…PWAM), and 88 to 108 (ILGV…IVGL).

This sequence belongs to the complex I subunit 3 family. As to quaternary structure, NDH is composed of at least 16 different subunits, 5 of which are encoded in the nucleus.

The protein resides in the plastid. It is found in the chloroplast thylakoid membrane. It catalyses the reaction a plastoquinone + NADH + (n+1) H(+)(in) = a plastoquinol + NAD(+) + n H(+)(out). It carries out the reaction a plastoquinone + NADPH + (n+1) H(+)(in) = a plastoquinol + NADP(+) + n H(+)(out). Its function is as follows. NDH shuttles electrons from NAD(P)H:plastoquinone, via FMN and iron-sulfur (Fe-S) centers, to quinones in the photosynthetic chain and possibly in a chloroplast respiratory chain. The immediate electron acceptor for the enzyme in this species is believed to be plastoquinone. Couples the redox reaction to proton translocation, and thus conserves the redox energy in a proton gradient. The protein is NAD(P)H-quinone oxidoreductase subunit 3, chloroplastic of Coffea arabica (Arabian coffee).